We begin with the raw amino-acid sequence, 159 residues long: MQGDPDVLRLLNEQLTSELTAINQYFLHSKMQENWGFTELAERTRVESFDEMRHAEAITDRILLLDGLPNYQRIGSLRVGQTLREQFEADLAIEYEVMSRLKPGIIMCREKQDSTSAVLLEKIVADEEEHIDYLETQLALMGQLGEELYSAQCVSRPPS.

The 145-residue stretch at 1 to 145 folds into the Ferritin-like diiron domain; it reads MQGDPDVLRL…TQLALMGQLG (145 aa). Residues Glu18 and Glu51 each coordinate Fe cation. Position 52 (Met52) interacts with heme b. Residues His54, Glu94, Glu127, and His130 each coordinate Fe cation.

Belongs to the bacterioferritin family. In terms of assembly, homooligomer of 24 subunits, arranged as 12 dimers, that are packed together to form an approximately spherical molecule with a central cavity, in which large amounts of iron can be deposited. It depends on heme b as a cofactor.

Its subcellular location is the cytoplasm. The protein localises to the cytosol. The protein resides in the membrane. It catalyses the reaction 4 Fe(2+) + O2 + 4 H(+) = 4 Fe(3+) + 2 H2O. It carries out the reaction Fe(2+)(in) = Fe(2+)(out). In terms of biological role, iron-storage protein, whose ferroxidase center binds Fe(2+), oxidizes it using dioxygen to Fe(3+), and participates in the subsequent Fe(3+) oxide mineral core formation within the central cavity of the BFR protein shell. Probably plays a crucial role in the intracellular existence of this organism by functioning as a temporary depository for iron in iron deprivation. The polypeptide is Bacterioferritin (bfr) (Mycobacterium leprae (strain TN)).